We begin with the raw amino-acid sequence, 356 residues long: Phosphoserine aminotransferase (356 aa).

L-glutamate is bound at residue Arg41. Pyridoxal 5'-phosphate contacts are provided by residues 76–77 (AS), Trp102, Thr150, Asp169, and Gln192. The residue at position 193 (Lys193) is an N6-(pyridoxal phosphate)lysine. 234–235 (NT) is a pyridoxal 5'-phosphate binding site.

Belongs to the class-V pyridoxal-phosphate-dependent aminotransferase family. SerC subfamily. Homodimer. Pyridoxal 5'-phosphate is required as a cofactor.

It localises to the cytoplasm. It carries out the reaction O-phospho-L-serine + 2-oxoglutarate = 3-phosphooxypyruvate + L-glutamate. It catalyses the reaction 4-(phosphooxy)-L-threonine + 2-oxoglutarate = (R)-3-hydroxy-2-oxo-4-phosphooxybutanoate + L-glutamate. The protein operates within amino-acid biosynthesis; L-serine biosynthesis; L-serine from 3-phospho-D-glycerate: step 2/3. It functions in the pathway cofactor biosynthesis; pyridoxine 5'-phosphate biosynthesis; pyridoxine 5'-phosphate from D-erythrose 4-phosphate: step 3/5. Its function is as follows. Catalyzes the reversible conversion of 3-phosphohydroxypyruvate to phosphoserine and of 3-hydroxy-2-oxo-4-phosphonooxybutanoate to phosphohydroxythreonine. The polypeptide is Phosphoserine aminotransferase (Flavobacterium johnsoniae (strain ATCC 17061 / DSM 2064 / JCM 8514 / BCRC 14874 / CCUG 350202 / NBRC 14942 / NCIMB 11054 / UW101) (Cytophaga johnsonae)).